The primary structure comprises 97 residues: Exodeoxyribonuclease 7 small subunit (97 aa).

Residues 1–22 (MAKTASPGDTAAGNGTEPLPDK) are disordered.

The protein belongs to the XseB family. In terms of assembly, heterooligomer composed of large and small subunits.

It localises to the cytoplasm. It carries out the reaction Exonucleolytic cleavage in either 5'- to 3'- or 3'- to 5'-direction to yield nucleoside 5'-phosphates.. Bidirectionally degrades single-stranded DNA into large acid-insoluble oligonucleotides, which are then degraded further into small acid-soluble oligonucleotides. This chain is Exodeoxyribonuclease 7 small subunit, found in Burkholderia vietnamiensis (strain G4 / LMG 22486) (Burkholderia cepacia (strain R1808)).